We begin with the raw amino-acid sequence, 232 residues long: Small ribosomal subunit protein uS3 (232 aa).

Residues 39–107 (VRQFLTKELA…PAQINIAEVR (69 aa)) form the KH type-2 domain.

This sequence belongs to the universal ribosomal protein uS3 family. In terms of assembly, part of the 30S ribosomal subunit. Forms a tight complex with proteins S10 and S14.

Its function is as follows. Binds the lower part of the 30S subunit head. Binds mRNA in the 70S ribosome, positioning it for translation. The polypeptide is Small ribosomal subunit protein uS3 (Yersinia pestis bv. Antiqua (strain Antiqua)).